We begin with the raw amino-acid sequence, 602 residues long: Elongation factor 4 (602 aa).

The tr-type G domain occupies 8 to 190 (DLIRNFSIVA…AIVHRLPPPK (183 aa)). GTP-binding positions include 20-25 (DHGKST) and 137-140 (NKID).

The protein belongs to the TRAFAC class translation factor GTPase superfamily. Classic translation factor GTPase family. LepA subfamily.

The protein resides in the cell inner membrane. The enzyme catalyses GTP + H2O = GDP + phosphate + H(+). Its function is as follows. Required for accurate and efficient protein synthesis under certain stress conditions. May act as a fidelity factor of the translation reaction, by catalyzing a one-codon backward translocation of tRNAs on improperly translocated ribosomes. Back-translocation proceeds from a post-translocation (POST) complex to a pre-translocation (PRE) complex, thus giving elongation factor G a second chance to translocate the tRNAs correctly. Binds to ribosomes in a GTP-dependent manner. This Cereibacter sphaeroides (strain KD131 / KCTC 12085) (Rhodobacter sphaeroides) protein is Elongation factor 4.